Here is a 602-residue protein sequence, read N- to C-terminus: Protein SHORT-ROOT 1 (602 aa).

Residues 12–55 are compositionally biased toward low complexity; the sequence is AASEQQQQQQQSASYNSRSTTSSGSRSSSHQTNASYSYYHHSSN. 3 disordered regions span residues 12-69, 101-145, and 165-185; these read AASE…YYYG, DFSS…TAAG, and DFSS…AVGG. The segment covering 56 to 68 has biased composition (gly residues); that stretch reads SGGGGGGGGGYYY. The span at 122–145 shows a compositional bias: low complexity; that stretch reads PPASSTPTGTAPTPPLSTSSTAAG. Residues 173-185 are compositionally biased toward gly residues; that stretch reads SGGGTASSGAVGG. The GRAS domain occupies 183–601; sequence VGGGGGGRWA…QPLVWASAWR (419 aa). The interval 190-253 is leucine repeat I (LRI); that stretch reads RWASQLLLEC…LTASGPRTLR (64 aa). A VHIID region spans residues 272–349; it reads ALRFQELSPW…PHLSITTVVS (78 aa). A VHIID motif is present at residues 311-315; the sequence is FHILD. Positions 365–401 are leucine repeat II (LRII); it reads EIGQRMEKFARLMGVPFRFRAVHHSGDLAELDLDALD. Residues 411–517 form a PFYRE region; the sequence is LAVNCVNSLR…ERGAGRAIVD (107 aa). Residues 520 to 601 are SAW; sequence SCPASESMER…QPLVWASAWR (82 aa).

This sequence belongs to the GRAS family. Interacts with SCR1. Interacts with SMOS1. In terms of tissue distribution, expressed in leaves and roots. Detected in the stele, the endodermis and part of the cortex.

The protein resides in the nucleus. Transcription factor required for the asymmetric cell division involved in radial pattern formation in roots. Essential for both cell division and cell specification. The sequence is that of Protein SHORT-ROOT 1 from Oryza sativa subsp. japonica (Rice).